The primary structure comprises 215 residues: Large ribosomal subunit protein uL4 (215 aa).

Positions 43–101 (HQRQGTSKTKERGEVRGSGRKLYRQKGTGNARVGDAQSPIRRGGGRAHGARPRDYAHDL) are disordered. Residues 50 to 59 (KTKERGEVRG) show a composition bias toward basic and acidic residues.

The protein belongs to the universal ribosomal protein uL4 family. Part of the 50S ribosomal subunit.

Functionally, one of the primary rRNA binding proteins, this protein initially binds near the 5'-end of the 23S rRNA. It is important during the early stages of 50S assembly. It makes multiple contacts with different domains of the 23S rRNA in the assembled 50S subunit and ribosome. Forms part of the polypeptide exit tunnel. The protein is Large ribosomal subunit protein uL4 of Salinibacter ruber (strain DSM 13855 / M31).